The chain runs to 179 residues: Caveolin-1 (179 aa).

At S2 the chain carries N-acetylserine. A Phosphoserine modification is found at S2. The required for homooligomerization stretch occupies residues 2–95 (SGGKYVDSEG…WKASFTTFTV (94 aa)). Residues 2–105 (SGGKYVDSEG…TKYWFYRLLS (104 aa)) lie on the Cytoplasmic side of the membrane. At K5 the chain carries N6-acetyllysine; alternate. A Glycyl lysine isopeptide (Lys-Gly) (interchain with G-Cter in ubiquitin); alternate cross-link involves residue K5. Y6 is subject to Phosphotyrosine. Phosphoserine is present on S9. The residue at position 14 (Y14) is a Phosphotyrosine; by ABL1. Y25 is modified (phosphotyrosine). Residues K26 and K30 each participate in a glycyl lysine isopeptide (Lys-Gly) (interchain with G-Cter in ubiquitin) cross-link. A Phosphoserine modification is found at S37. Glycyl lysine isopeptide (Lys-Gly) (interchain with G-Cter in ubiquitin) cross-links involve residues K39, K48, and K58. Residues 83 to 95 (DGIWKASFTTFTV) are interaction with CAVIN3. The segment at residues 106–126 (ALFGIPMALIWGIYFAILSFL) is an intramembrane region (helical). Over 127–179 (HIWAVVPCIKSFLIEIQCISRVYSIYVHTFCDPLFEAIGKVFSNIRINMQKEI) the chain is Cytoplasmic. An interacts with SPRY1, SPRY2, SPRY3 and SPRY4 region spans residues 132-143 (VPCIKSFLIEIQ). Residues C134, C144, and C157 are each lipidated (S-palmitoyl cysteine). An interacts with SPRY1, SPRY2, and SPRY4 region spans residues 150–161 (SIYVHTFCDPLF). The interval 168-179 (FSNIRINMQKEI) is interacts with SPRY1, SPRY2, SPRY3 and SPRY4.

Belongs to the caveolin family. In terms of assembly, homooligomer. Interacts with GLIPR2. Interacts with NOSTRIN. Interacts with SNAP25 and STX1A. Interacts (via the N-terminus) with DPP4; the interaction is direct. Interacts with CTNNB1, CDH1 and JUP. Interacts with PACSIN2; this interaction induces membrane tubulation. Interacts with SLC7A9. Interacts with BMX and BTK. Interacts with TGFBR1. Interacts with CAVIN3 (via leucine-zipper domain) in a cholesterol-sensitive manner. Interacts with CAVIN1. Interacts with EHD2 in a cholesterol-dependent manner. Forms a ternary complex with UBXN6 and VCP; mediates CAV1 targeting to lysosomes for degradation. Interacts with ABCG1; this interaction regulates ABCG1-mediated cholesterol efflux. Interacts with NEU3; this interaction enhances NEU3 sialidase activity within caveola. Interacts (via C-terminus) with SPRY1, SPRY2 (via C-terminus), SPRY3, and SPRY4. Interacts with IGFBP5; this interaction allows trafficking of IGFBP5 from the plasma membrane to the nucleus. Post-translationally, phosphorylated at Tyr-14 by ABL1 in response to oxidative stress. In terms of processing, ubiquitinated. Undergo monoubiquitination and multi- and/or polyubiquitination. Monoubiquitination of N-terminal lysines promotes integration in a ternary complex with UBXN6 and VCP which promotes oligomeric CAV1 targeting to lysosomes for degradation. Ubiquitinated by ZNRF1; leading to degradation and modulation of the TLR4-mediated immune response.

Its subcellular location is the golgi apparatus membrane. The protein resides in the cell membrane. The protein localises to the membrane. It is found in the caveola. It localises to the membrane raft. Its function is as follows. May act as a scaffolding protein within caveolar membranes. Forms a stable heterooligomeric complex with CAV2 that targets to lipid rafts and drives caveolae formation. Mediates the recruitment of CAVIN proteins (CAVIN1/2/3/4) to the caveolae. Interacts directly with G-protein alpha subunits and can functionally regulate their activity. Involved in the costimulatory signal essential for T-cell receptor (TCR)-mediated T-cell activation. Its binding to DPP4 induces T-cell proliferation and NF-kappa-B activation in a T-cell receptor/CD3-dependent manner. Recruits CTNNB1 to caveolar membranes and may regulate CTNNB1-mediated signaling through the Wnt pathway. Negatively regulates TGFB1-mediated activation of SMAD2/3 by mediating the internalization of TGFBR1 from membrane rafts leading to its subsequent degradation. Binds 20(S)-hydroxycholesterol (20(S)-OHC). The polypeptide is Caveolin-1 (CAV1) (Eulemur macaco macaco (Black lemur)).